The following is a 400-amino-acid chain: Na(+)/H(+) antiporter NhaA (400 aa).

The next 11 membrane-spanning stretches (helical) occupy residues 10–30 (FNLEASGGIVLALAAIAAMII), 60–80 (AHHWINDGLMAVFFFLVGLEL), 95–115 (IILPAGAALGGMIMPAIVYLF), 126–146 (GWAIPAATDIAFALGILSLLG), 155–175 (VFLVSIAIFDDIGAIIIIALF), 178–198 (NDLSLGSLAIAGLCLPFLYLL), 218–238 (VAVLKSGIHATLAGVVLALFI), 265–285 (GILPLFAFANAGISLKGAGFG), 295–315 (IAAGLFIGKQVGVMLMCWLIF), 334–354 (AALLCGVGFTMSLFIGGLAFA), and 364–384 (LGIIMGSIVSGIAGYMMLKAT).

Belongs to the NhaA Na(+)/H(+) (TC 2.A.33) antiporter family.

It is found in the cell inner membrane. The enzyme catalyses Na(+)(in) + 2 H(+)(out) = Na(+)(out) + 2 H(+)(in). Na(+)/H(+) antiporter that extrudes sodium in exchange for external protons. This Psychrobacter cryohalolentis (strain ATCC BAA-1226 / DSM 17306 / VKM B-2378 / K5) protein is Na(+)/H(+) antiporter NhaA.